Reading from the N-terminus, the 400-residue chain is Aminomethyltransferase, mitochondrial (400 aa).

Substrate is bound by residues Glu-221, Arg-250, and Tyr-397.

This sequence belongs to the GcvT family. As to quaternary structure, component of the glycine decarboxylase complex (GDC), which is composed of four proteins: P, T, L and H.

The protein localises to the mitochondrion. It carries out the reaction N(6)-[(R)-S(8)-aminomethyldihydrolipoyl]-L-lysyl-[protein] + (6S)-5,6,7,8-tetrahydrofolate = N(6)-[(R)-dihydrolipoyl]-L-lysyl-[protein] + (6R)-5,10-methylene-5,6,7,8-tetrahydrofolate + NH4(+). The glycine cleavage system (glycine decarboxylase complex) catalyzes the degradation of glycine. The sequence is that of Aminomethyltransferase, mitochondrial (GCV1) from Saccharomyces cerevisiae (strain ATCC 204508 / S288c) (Baker's yeast).